We begin with the raw amino-acid sequence, 450 residues long: Protein tweety homolog 1 (450 aa).

Over 1 to 43 (MGAPPGYRPSAWVHLLHQLPRADFQLRPVPSGFAPRDQEYQQA) the chain is Extracellular. Residues 44-64 (LLLVAALAGLGLGLSLIFIAV) form a helical membrane-spanning segment. Residues 65-88 (YLIRFCCCRPPEPHGAKSPPPGGG) lie on the Cytoplasmic side of the membrane. A helical transmembrane segment spans residues 89 to 109 (CVTWSCIAALLVGCAGIGIGF). Topologically, residues 110–214 (YGNSETSDGV…DVTFVEEYRW (105 aa)) are extracellular. N-linked (GlcNAc...) asparagine glycosylation occurs at Asn-130. Residues 215–235 (LAYVLLLLLVLLVCLFTLLGL) traverse the membrane as a helical segment. Over 236-240 (AKQSK) the chain is Cytoplasmic. A helical transmembrane segment spans residues 241 to 261 (WLVVVMTAMSLLVLVLSWGSM). The Extracellular portion of the chain corresponds to 262–390 (GLEAATAVGL…LRGLCEDALE (129 aa)). 2 disulfide bridges follow: Cys-275/Cys-385 and Cys-303/Cys-370. Residues Asn-284 and Asn-355 are each glycosylated (N-linked (GlcNAc...) asparagine). The helical transmembrane segment at 391–411 (GLLFLMLFSLLSAGALATTLC) threads the bilayer. Topologically, residues 412 to 450 (SLPRAWALFPPSDDYDDTDDDDPFNPQESKRFVQWQSSI) are cytoplasmic. The interval 428–450 (DTDDDDPFNPQESKRFVQWQSSI) is disordered. Ser-440 carries the phosphoserine modification.

It belongs to the tweety family. As to quaternary structure, homotetramer; disulfide-linked. Homodimer. In terms of processing, N-glycosylated. Contains high-mannose, hybrid and complex oligosaccharides. In terms of tissue distribution, expressed in the astrocytes (at protein level). Restricted mainly to neural tissues. Strongly expressed in brain and eye.

It is found in the cell membrane. It catalyses the reaction chloride(in) = chloride(out). It carries out the reaction L-glutamate(out) = L-glutamate(in). Its activity is regulated as follows. Inhibited by (4-[(2-butyl-6,7-dichloro-2- cyclopentyl-2,3-dihydro-1-oxo-1H-inden-5-yl)oxy]butanoic acid). Its function is as follows. Calcium-independent, swelling-dependent volume-regulated anion channel (VRAC-swell) which plays a pivotal role in the process of regulatory volume decrease (RVD) in the brain through the efflux of anions like chloride and organic osmolytes like glutamate. The protein is Protein tweety homolog 1 (Ttyh1) of Mus musculus (Mouse).